The primary structure comprises 350 residues: C-X-C chemokine receptor type 1 (350 aa).

The Extracellular portion of the chain corresponds to Met-1 to Lys-39. Residues Asn-3 and Asn-16 are each glycosylated (N-linked (GlcNAc...) asparagine). A helical membrane pass occupies residues Tyr-40–Tyr-66. At Ser-67–Asp-75 the chain is on the cytoplasmic side. Residues Val-76–Ala-96 form a helical membrane-spanning segment. Residues Ala-97–Lys-111 lie on the Extracellular side of the membrane. An intrachain disulfide couples Cys-110 to Cys-187. Residues Val-112–Val-133 traverse the membrane as a helical segment. Residues Asp-134–Lys-154 lie on the Cytoplasmic side of the membrane. A helical transmembrane segment spans residues Phe-155–Phe-174. Over Arg-175–Arg-199 the chain is Extracellular. Residues Met-200–Phe-220 traverse the membrane as a helical segment. Over Cys-221–Arg-242 the chain is Cytoplasmic. A helical transmembrane segment spans residues Val-243–Ala-264. Residues Asp-265 to Arg-285 lie on the Extracellular side of the membrane. Residues Ala-286–Ile-308 form a helical membrane-spanning segment. Residues Gly-309–Leu-350 are Cytoplasmic-facing.

This sequence belongs to the G-protein coupled receptor 1 family. Interacts with IL8. Interacts with GNAI2.

Its subcellular location is the cell membrane. Receptor to interleukin-8, which is a powerful neutrophils chemotactic factor. Binding of IL-8 to the receptor causes activation of neutrophils. This response is mediated via a G-protein that activates a phosphatidylinositol-calcium second messenger system. This chain is C-X-C chemokine receptor type 1 (CXCR1), found in Homo sapiens (Human).